Consider the following 202-residue polypeptide: Large ribosomal subunit protein bL25 (202 aa).

The protein belongs to the bacterial ribosomal protein bL25 family. CTC subfamily. As to quaternary structure, part of the 50S ribosomal subunit; part of the 5S rRNA/L5/L18/L25 subcomplex. Contacts the 5S rRNA. Binds to the 5S rRNA independently of L5 and L18.

Functionally, this is one of the proteins that binds to the 5S RNA in the ribosome where it forms part of the central protuberance. This is Large ribosomal subunit protein bL25 from Rickettsia bellii (strain OSU 85-389).